The sequence spans 491 residues: Alpha-2-antiplasmin (491 aa).

The signal sequence occupies residues 1 to 27; that stretch reads MALLRGLLVLSLSCLQGPCFTFSPVSA. Positions 28 to 39 are excised as a propeptide; that stretch reads VDLPGQQPVSEQ. A disulfide bridge connects residues C70 and C143. N-linked (GlcNAc...) asparagine glycosylation is found at N126, N295, N309, and N316. Residues 439–491 form a disordered region; sequence SALPQLQEQRDSPDNRLIGQNDKADFHGGKTFGPDLKLAPRMEEDYPQFSSPK. At Y484 the chain carries Sulfotyrosine.

Belongs to the serpin family. Forms protease inhibiting heterodimer with TMPRSS7. In terms of processing, proteolytically cleaved at Pro-35 by both the prolyl endopeptidase FAP form and antiplasmin-cleaving enzyme FAP soluble form to generate mature alpha-2-antiplasmin. As to expression, expressed by the liver and secreted in plasma.

The protein localises to the secreted. Serine protease inhibitor. The major targets of this inhibitor are plasmin and trypsin, but it also inactivates matriptase-3/TMPRSS7 and chymotrypsin. The chain is Alpha-2-antiplasmin (Serpinf2) from Mus musculus (Mouse).